The primary structure comprises 627 residues: Neuronal acetylcholine receptor subunit alpha-4 (627 aa).

A signal peptide spans 1-26 (MELGGPGAPRLLPPLLLLLGTGLLRA). Topologically, residues 27-249 (SSHVETRAHA…RRLPLFYTIN (223 aa)) are extracellular. Residue Asn-57 is glycosylated (N-linked (GlcNAc...) asparagine). The Ca(2+) site is built by Val-76 and Glu-78. 2 N-linked (GlcNAc...) asparagine glycosylation sites follow: Asn-107 and Asn-174. Cystine bridges form between Cys-161/Cys-175 and Cys-225/Cys-226. A helical transmembrane segment spans residues 250-269 (LIIPCLLISCLTVLVFYLPS). The S-palmitoyl cysteine moiety is linked to residue Cys-271. 2 helical membrane-spanning segments follow: residues 275–291 (ITLC…FLLL) and 306–330 (IGEY…VLNV). Over 331 to 600 (HHRSPRTHTM…WKYVAMVIDR (270 aa)) the chain is Cytoplasmic. Disordered stretches follow at residues 382–481 (PRFW…VEGG) and 496–561 (DDAA…LPLS). Ser-424 is subject to Phosphoserine. The segment covering 501 to 511 (EADGQAAGALA) has biased composition (low complexity). A phosphoserine mark is found at Ser-538 and Ser-541. Residues 538-548 (SSVSPSATVKT) are compositionally biased toward polar residues. The helical transmembrane segment at 601–619 (IFLWMFIIVCLLGTVGLFL) threads the bilayer.

Belongs to the ligand-gated ion channel (TC 1.A.9) family. Acetylcholine receptor (TC 1.A.9.1) subfamily. Alpha-4/CHRNA4 sub-subfamily. In terms of assembly, neuronal AChR is composed of two different types of subunits: alpha and beta. CHRNA4 forms heteropentameric neuronal acetylcholine receptors with CHRNB2 and CHRNB4, as well as CHRNA5 and CHRNB3 as accesory subunits. Found in two major stoichiometric forms, LS (low agonist sensitivity): (CHRNA4)3:(CHRNB2)2 and HS (high agonist sensitivity): (CHRNA4)2:(CHRNB2)3, the two stoichiometric forms differ in their unitary conductance, calcium permeability, ACh sensitivity and potentiation by divalent cation. Cells produce predominantly an (CHRNA4)3:(CHRNB2)2 nAChR. The (CHRNA4)2:(CHRNB2)3 expression is selectively up-regulated by nicotine and has lower single channel conductance and calcium permeability. In the striatum, also forms CHRNA4:CHRNA6:CHRNB2 complexes. Also found in the stoichiometric form: (CHRNA4:CHRNB2)2:CHRNB3. Interacts with RIC3; which is required for proper folding and assembly. Interacts with LYPD6.

It localises to the synaptic cell membrane. The protein resides in the cell membrane. The enzyme catalyses Ca(2+)(in) = Ca(2+)(out). It catalyses the reaction K(+)(in) = K(+)(out). It carries out the reaction Na(+)(in) = Na(+)(out). Its activity is regulated as follows. Activated by a myriad of ligands such as acetylcholine, cytisine, nicotine, choline and epibatidine. Channel potentiation by calcium is stoichiometry-selective, CHRNA4:CHRNB2 nACh receptor is achieved by calcium association with topographically distinct sites framed by anionic residues within the CHRNA4 subunit and between the CHRNA4 and CHRNB2 subunits. nAChR activity is inhibited by the antagonist alpha-conotoxins BuIA, PnIA, GID and MII, small disulfide-constrained peptides from cone snails. In terms of biological role, component of neuronal acetylcholine receptors (nAChRs) that function as pentameric, ligand-gated cation channels with high calcium permeability among other activities. nAChRs are excitatory neurotrasnmitter receptors formed by a collection of nAChR subunits known to mediate synaptic transmission in the nervous system and the neuromuscular junction. Each nAchR subunit confers differential attributes to channel properties, including activation, deactivation and desensitization kinetics, pH sensitivity, cation permeability, and binding to allosteric modulators. CHRNA4 forms heteropentameric neuronal acetylcholine receptors with CHRNB2 and CHRNB4, as well as CHRNA5 and CHRNB3 as accesory subunits. Is the most abundant nAChR subtype expressed in the central nervous system. Found in two major stoichiometric forms,(CHRNA4)3:(CHRNB2)2 and (CHRNA4)2:(CHRNB2)3, the two stoichiometric forms differ in their unitary conductance, calcium permeability, ACh sensitivity and potentiation by divalent cation. Involved in the modulation of calcium-dependent signaling pathways, influences the release of neurotransmitters, including dopamine, glutamate and GABA. This Homo sapiens (Human) protein is Neuronal acetylcholine receptor subunit alpha-4.